The following is a 351-amino-acid chain: UPF0764 protein C16orf89 homolog (351 aa).

Residues 1-25 (MKSLKMLYPLFMLLVLSSKIDLSNQ) form the signal peptide.

It belongs to the UPF0764 family. As to quaternary structure, homodimer.

Its subcellular location is the secreted. The polypeptide is UPF0764 protein C16orf89 homolog (Danio rerio (Zebrafish)).